Consider the following 49-residue polypeptide: Putative DNA-directed RNA polymerase subunit omega (49 aa).

Belongs to the RNA polymerase subunit omega family.

The protein resides in the plastid. Its subcellular location is the chloroplast. The enzyme catalyses RNA(n) + a ribonucleoside 5'-triphosphate = RNA(n+1) + diphosphate. Functionally, may be involved in RNA polymerase activity. The protein is Putative DNA-directed RNA polymerase subunit omega (rpoZ) of Cyanidioschyzon merolae (strain NIES-3377 / 10D) (Unicellular red alga).